The primary structure comprises 58 residues: Small ribosomal subunit protein bS21 (58 aa).

A disordered region spans residues 28–58 (VLQDIRKHEHYEKPSIKKKKKSEAARKKKRF). A compositionally biased stretch (basic and acidic residues) spans 31 to 42 (DIRKHEHYEKPS). Residues 43-58 (IKKKKKSEAARKKKRF) are compositionally biased toward basic residues.

It belongs to the bacterial ribosomal protein bS21 family.

The sequence is that of Small ribosomal subunit protein bS21 from Syntrophomonas wolfei subsp. wolfei (strain DSM 2245B / Goettingen).